A 616-amino-acid chain; its full sequence is UvrABC system protein C (616 aa).

A GIY-YIG domain is found at 21–99 (HQPGVYRMYD…IKLYLPKYNV (79 aa)). Residues 209–244 (RQVIASLVEKMEQASQSLNFEQAATFRDQIQALRRV) enclose the UVR domain.

This sequence belongs to the UvrC family. In terms of assembly, interacts with UvrB in an incision complex.

Its subcellular location is the cytoplasm. In terms of biological role, the UvrABC repair system catalyzes the recognition and processing of DNA lesions. UvrC both incises the 5' and 3' sides of the lesion. The N-terminal half is responsible for the 3' incision and the C-terminal half is responsible for the 5' incision. The protein is UvrABC system protein C of Photobacterium profundum (strain SS9).